The chain runs to 203 residues: NNYCKICPKGTHTLCKYGTSMKPNCGGKIVKSYGVTNDEKNEIVKRHNEFRQKVAQGLETRGNPGPQPPAKNMNLLVWNDELAKIAQTWANQCNFGHDQCRNTAKYPVGQNVAIASTTGNSYQTMSYLIKMWEDEVKDYNPHKDLMHNNFSKVGHYTQMVWGKTKEIGCGSVKYIENKWHTHYLVCNYGPAGNYMNQPVYERK.

4 disulfides stabilise this stretch: C4-C15, C7-C100, C25-C93, and C169-C186. Residues 45–188 (KRHNEFRQKV…WHTHYLVCNY (144 aa)) enclose the SCP domain.

It belongs to the CRISP family. Venom allergen 5-like subfamily. In terms of tissue distribution, expressed by the venom gland.

Its subcellular location is the secreted. The sequence is that of Venom allergen 5 from Dolichovespula arenaria (Yellow hornet).